A 351-amino-acid chain; its full sequence is Phosphoribosylformylglycinamidine cyclo-ligase (351 aa).

Belongs to the AIR synthase family.

It is found in the cytoplasm. The catalysed reaction is 2-formamido-N(1)-(5-O-phospho-beta-D-ribosyl)acetamidine + ATP = 5-amino-1-(5-phospho-beta-D-ribosyl)imidazole + ADP + phosphate + H(+). Its pathway is purine metabolism; IMP biosynthesis via de novo pathway; 5-amino-1-(5-phospho-D-ribosyl)imidazole from N(2)-formyl-N(1)-(5-phospho-D-ribosyl)glycinamide: step 2/2. This is Phosphoribosylformylglycinamidine cyclo-ligase from Burkholderia ambifaria (strain MC40-6).